A 298-amino-acid chain; its full sequence is Transcription factor BOA (298 aa).

3 disordered regions span residues 1 to 26 (MGKEVMVSDYGDDDGEDAGGGDEYRI), 79 to 143 (LRSS…KRPR), and 206 to 232 (EDPYSSSDQLFSSTPVPPQSFQDGGGS). A compositionally biased stretch (acidic residues) spans 10–20 (YGDDDGEDAGG). Residues 104 to 113 (DPKKQKKSDG) show a composition bias toward basic and acidic residues. The span at 122–131 (STAEEGDSGP) shows a compositional bias: acidic residues. The segment at residues 138–197 (TSKRPRLVWTPQLHKRFVDVVAHLGIKNAVPKTIMQLMNVEGLTRENVASHLQKYRLYLK) is a DNA-binding region (myb-like GARP). The segment covering 209–227 (YSSSDQLFSSTPVPPQSFQ) has biased composition (polar residues).

The protein resides in the nucleus. Transcription factor that is a critical component of the regulatory circuit of the circadian clock. Binds to specific sites on CCA1 promoter leading to CCA1 activation. Is required for the rhythmic expression of other clock genes such as LHY, GI and APRR1/TOC1. The protein is Transcription factor BOA (BOA) of Arabidopsis thaliana (Mouse-ear cress).